A 119-amino-acid chain; its full sequence is Holo-[acyl-carrier-protein] synthase (119 aa).

2 residues coordinate Mg(2+): Asp8 and Glu58.

This sequence belongs to the P-Pant transferase superfamily. AcpS family. Mg(2+) is required as a cofactor.

The protein localises to the cytoplasm. The catalysed reaction is apo-[ACP] + CoA = holo-[ACP] + adenosine 3',5'-bisphosphate + H(+). Its function is as follows. Transfers the 4'-phosphopantetheine moiety from coenzyme A to a Ser of acyl-carrier-protein. This is Holo-[acyl-carrier-protein] synthase from Bacillus cereus (strain ZK / E33L).